Consider the following 108-residue polypeptide: MAPKKDKVPPPSSKPAKSGGGKQKKKKWSKGKQKEKVNNMVLFDQGTYDKLLTEAPKFKLITPSILSDRMRINGSLARRAIRELMAKGLIRMVSAHSSQQIYTRATNT.

Residues 1 to 36 (MAPKKDKVPPPSSKPAKSGGGKQKKKKWSKGKQKEK) are disordered. The segment covering 22-31 (KQKKKKWSKG) has biased composition (basic residues).

Belongs to the eukaryotic ribosomal protein eS25 family.

The chain is Small ribosomal subunit protein eS25y (RPS25B) from Arabidopsis thaliana (Mouse-ear cress).